The following is a 419-amino-acid chain: Putative nucleobase-ascorbate transporter 9 (419 aa).

A compositionally biased stretch (gly residues) spans 1-22 (MANGAGNGGGGAGGNGGGGNNG). The interval 1–28 (MANGAGNGGGGAGGNGGGGNNGAGNRAE) is disordered. The next 10 helical transmembrane spans lie at 64 to 84 (LLSL…MGGG), 91 to 111 (VIQT…FFGT), 113 to 133 (LPVI…IIYS), 153 to 173 (IQGA…LGVW), 184 to 204 (SIAP…FPLV), 220 to 240 (GMML…SSGV), 273 to 293 (SFAM…LFYA), 313 to 333 (RVIQ…KFGA), 334 to 354 (FFAS…LCFV), and 370 to 390 (FNTK…PQYF).

This sequence belongs to the nucleobase:cation symporter-2 (NCS2) (TC 2.A.40) family.

It is found in the membrane. This Arabidopsis thaliana (Mouse-ear cress) protein is Putative nucleobase-ascorbate transporter 9 (NAT9).